Consider the following 624-residue polypeptide: MADVPADLAAVWPRVLEQLLGEGQQGIEPKDKQWIERCQPLALVADTALLAVPNEWGKRVLEGRLAPLISETLTRECGRPIRIAITVDDSAGEPPSPPAPPMHQSHQSQQGHRYPAQQRDDAPRGDAYDGYGHRPSDDGMPTRRPAYPDYQQQRPEPGAWPRTQEDLSWQQPRHGGYQDREQPSGEPYRESESYRERENEQYREQAPEQWRQPYGTGRPQQPQHDYRSGPPEHQGYEQQRPDRQDQGQGPRQGGHGPGRTGGSVPGPMGAQPAPAPGPGEPHARLNPKYLFDTFVIGASNRFAHAAAVAVAEAPAKAYNPLFIYGESGLGKTHLLHAIGHYARSLYPGTRVRYVSSEEFTNEFINSIRDGKGDTFRKRYRDVDILLVDDIQFLASKESTQEEFFHTFNTLHNANKQIVLSSDRPPKQLVTLEDRLRNRFEWGLTTDVQPPELETRIAILRKKAVQEQLNAPPEVLEFIASRISRNIRELEGALIRVTAFASLNRQPVDLGLTEIVLKDLIPGGEESAPEITAPAIMAATADYFGLTVDDLCGSSRTRVLVTARQIAMYLCRELTDLSLPKIGAQFGGRDHTTVMHADRKIRALMAERRSIYNQVTELTNRIKNG.

Residues 1–99 (MADVPADLAA…SAGEPPSPPA (99 aa)) are domain I, interacts with DnaA modulators. The segment at 88-284 (DDSAGEPPSP…APGPGEPHAR (197 aa)) is disordered. The interval 100-283 (PPMHQSHQSQ…PAPGPGEPHA (184 aa)) is domain II. Residues 102–112 (MHQSHQSQQGH) show a composition bias toward low complexity. 2 stretches are compositionally biased toward basic and acidic residues: residues 118–141 (QRDD…DGMP) and 176–206 (GYQD…REQA). Over residues 250–264 (PRQGGHGPGRTGGSV) the composition is skewed to gly residues. The tract at residues 284–500 (RLNPKYLFDT…GALIRVTAFA (217 aa)) is domain III, AAA+ region. Gly328, Gly330, Lys331, and Thr332 together coordinate ATP. Positions 501-624 (SLNRQPVDLG…TELTNRIKNG (124 aa)) are domain IV, binds dsDNA.

Belongs to the DnaA family. Oligomerizes as a right-handed, spiral filament on DNA at oriC.

Its subcellular location is the cytoplasm. In terms of biological role, plays an essential role in the initiation and regulation of chromosomal replication. ATP-DnaA binds to the origin of replication (oriC) to initiate formation of the DNA replication initiation complex once per cell cycle. Binds the DnaA box (a 9 base pair repeat at the origin) and separates the double-stranded (ds)DNA. Forms a right-handed helical filament on oriC DNA; dsDNA binds to the exterior of the filament while single-stranded (ss)DNA is stabiized in the filament's interior. The ATP-DnaA-oriC complex binds and stabilizes one strand of the AT-rich DNA unwinding element (DUE), permitting loading of DNA polymerase. After initiation quickly degrades to an ADP-DnaA complex that is not apt for DNA replication. Binds acidic phospholipids. Functionally, the DnaA box consensus is 5'-(T/C)(T/C)(G/AC)TCCACA-3'. The protein is Chromosomal replication initiator protein DnaA of Streptomyces anulatus (Streptomyces chrysomallus).